The sequence spans 262 residues: Acyl-[acyl-carrier-protein]--UDP-N-acetylglucosamine O-acyltransferase (262 aa).

Belongs to the transferase hexapeptide repeat family. LpxA subfamily. As to quaternary structure, homotrimer.

The protein localises to the cytoplasm. The catalysed reaction is a (3R)-hydroxyacyl-[ACP] + UDP-N-acetyl-alpha-D-glucosamine = a UDP-3-O-[(3R)-3-hydroxyacyl]-N-acetyl-alpha-D-glucosamine + holo-[ACP]. The protein operates within glycolipid biosynthesis; lipid IV(A) biosynthesis; lipid IV(A) from (3R)-3-hydroxytetradecanoyl-[acyl-carrier-protein] and UDP-N-acetyl-alpha-D-glucosamine: step 1/6. Its function is as follows. Involved in the biosynthesis of lipid A, a phosphorylated glycolipid that anchors the lipopolysaccharide to the outer membrane of the cell. In Janthinobacterium sp. (strain Marseille) (Minibacterium massiliensis), this protein is Acyl-[acyl-carrier-protein]--UDP-N-acetylglucosamine O-acyltransferase.